The chain runs to 389 residues: Alanine racemase TOXG (389 aa).

An N6-(pyridoxal phosphate)lysine modification is found at lysine 235.

This sequence belongs to the threonine aldolase family. It depends on pyridoxal 5'-phosphate as a cofactor.

It catalyses the reaction L-alanine = D-alanine. Its pathway is mycotoxin biosynthesis; HC-toxin biosynthesis. Its function is as follows. Alanine racemase, part of the diffuse TOX2 gene cluster that mediates the biosynthesis of the HC-toxin, cyclic tetrapeptide of structure cyclo(D-Pro-L-Ala-D-Ala-L-Aeo), where Aeo stands for 2-amino-9,10-epoxi-8-oxodecanoic acid. HC-toxin is a determinant of specificity and virulence in the interaction between the producing fungus and its host, maize. TOXG catalyzes the conversion of L-alanine into D-alanine, an essential precursor for the production of the major forms of HC-toxin by the non-ribosomal peptide synthetase HTS1. This Cochliobolus carbonum (Maize leaf spot fungus) protein is Alanine racemase TOXG.